Here is a 460-residue protein sequence, read N- to C-terminus: 7-cyano-7-deazaguanine synthase 2 (460 aa).

C2 functions as the For GATase activity in the catalytic mechanism. The 224-residue stretch at 2–225 folds into the Glutamine amidotransferase type-2 domain; the sequence is CSVTGVLIIK…PYSIVEVNDN (224 aa). 245–255 provides a ligand contact to ATP; that stretch reads ASGGLDSTVAA. Residues C426, C434, C437, and C440 each coordinate Zn(2+).

It belongs to the QueC family. The cofactor is Zn(2+).

It carries out the reaction 7-carboxy-7-deazaguanine + NH4(+) + ATP = 7-cyano-7-deazaguanine + ADP + phosphate + H2O + H(+). It functions in the pathway purine metabolism; 7-cyano-7-deazaguanine biosynthesis. Its function is as follows. Catalyzes the ATP-dependent conversion of 7-carboxy-7-deazaguanine (CDG) to 7-cyano-7-deazaguanine (preQ(0)). The sequence is that of 7-cyano-7-deazaguanine synthase 2 (queC2) from Sulfurisphaera tokodaii (strain DSM 16993 / JCM 10545 / NBRC 100140 / 7) (Sulfolobus tokodaii).